We begin with the raw amino-acid sequence, 450 residues long: UDP-N-acetylmuramoylalanine--D-glutamate ligase (450 aa).

115-121 (GTNGKTT) provides a ligand contact to ATP.

Belongs to the MurCDEF family.

The protein resides in the cytoplasm. It catalyses the reaction UDP-N-acetyl-alpha-D-muramoyl-L-alanine + D-glutamate + ATP = UDP-N-acetyl-alpha-D-muramoyl-L-alanyl-D-glutamate + ADP + phosphate + H(+). The protein operates within cell wall biogenesis; peptidoglycan biosynthesis. Cell wall formation. Catalyzes the addition of glutamate to the nucleotide precursor UDP-N-acetylmuramoyl-L-alanine (UMA). This chain is UDP-N-acetylmuramoylalanine--D-glutamate ligase, found in Lachnospira eligens (strain ATCC 27750 / DSM 3376 / VPI C15-48 / C15-B4) (Eubacterium eligens).